A 344-amino-acid chain; its full sequence is Oxygen sensor histidine kinase NreB (344 aa).

4 residues coordinate [4Fe-4S] cluster: Cys58, Cys61, Cys73, and Cys76. The Histidine kinase domain maps to 147 to 344 (ENERKRISRE…GTIITLDIPI (198 aa)). Residue His158 is modified to Phosphohistidine; by autocatalysis.

[4Fe-4S] cluster is required as a cofactor. Post-translationally, autophosphorylated.

The protein resides in the cytoplasm. It catalyses the reaction ATP + protein L-histidine = ADP + protein N-phospho-L-histidine.. Functionally, member of the two-component regulatory system NreB/NreC involved in the control of dissimilatory nitrate/nitrite reduction in response to oxygen. NreB functions as a direct oxygen sensor histidine kinase which is autophosphorylated, in the absence of oxygen, probably at the conserved histidine residue, and transfers its phosphate group probably to a conserved aspartate residue of NreC. NreB/NreC activates the expression of the nitrate (narGHJI) and nitrite (nir) reductase operons, as well as the putative nitrate transporter gene narT. This Staphylococcus epidermidis (strain ATCC 12228 / FDA PCI 1200) protein is Oxygen sensor histidine kinase NreB (nreB).